A 321-amino-acid polypeptide reads, in one-letter code: Olfactory receptor 52N4 (321 aa).

Residues 1 to 27 lie on the Extracellular side of the membrane; the sequence is MLTLNKTDLIPASFILNGVPGLEDTQL. N-linked (GlcNAc...) asparagine glycosylation is present at asparagine 5. The helical transmembrane segment at 28 to 48 threads the bilayer; the sequence is WISFPFCSMYVVAMVGNCGLL. The Cytoplasmic segment spans residues 49 to 56; that stretch reads YLIHYEDA. The chain crosses the membrane as a helical span at residues 57-77; that stretch reads LHKPMYYFLAMLSFTDLVMCS. At 78–101 the chain is on the extracellular side; it reads STIPKALCIFWFHLKDIGFDECLV. Cysteine 99 and cysteine 191 are joined by a disulfide. The helical transmembrane segment at 102 to 122 threads the bilayer; that stretch reads QMFFTHTFTGMESGVLMLMAL. Residues 123-141 are Cytoplasmic-facing; sequence DRYVAICYPLRYSTILTNP. Residues 142–162 traverse the membrane as a helical segment; the sequence is VIAKVGTATFLRGVLLIIPFT. Over 163–198 the chain is Extracellular; that stretch reads FLTKLLPYCRGNILPHTYCDHMSVAKLSCGNVKVNA. The helical transmembrane segment at 199-219 threads the bilayer; that stretch reads IYGLMVALLIWGFDILCITNS. The Cytoplasmic segment spans residues 220 to 239; it reads YTMILRAVVSLSSADARQKA. Residues 240 to 260 form a helical membrane-spanning segment; it reads FNTCTAHICAIVFSYTPAFFS. Over 261–276 the chain is Extracellular; that stretch reads FFSHRFGEHIIPPSCH. Residues 277–297 traverse the membrane as a helical segment; it reads IIVANIYLLLPPTMNPIVYGV. The Cytoplasmic segment spans residues 298 to 321; the sequence is KTKQIRDCVIRILSGSKDTKSYSM.

The protein belongs to the G-protein coupled receptor 1 family.

It localises to the cell membrane. Its function is as follows. Odorant receptor. The chain is Olfactory receptor 52N4 (OR52N4) from Homo sapiens (Human).